A 108-amino-acid chain; its full sequence is Transcriptional activator HlyU (108 aa).

Residues 13–107 (EMEKNSAKAV…LLHRLYCQAN (95 aa)) form the HTH arsR-type domain. The H-T-H motif DNA-binding region spans 47 to 66 (VGELSSRLELSQSALSQHLA).

Functionally, up-regulates the expression of the hemolysin gene, hlyA, and may promote expression of other virulence determinants in vivo. It may have both positive and negative regulator activities. The sequence is that of Transcriptional activator HlyU (hlyU) from Vibrio cholerae serotype O1 (strain ATCC 39315 / El Tor Inaba N16961).